The primary structure comprises 178 residues: Probable coatomer subunit zeta-B (178 aa).

It belongs to the adaptor complexes small subunit family. As to quaternary structure, oligomeric complex that consists of at least the alpha, beta, beta', gamma, delta, epsilon and zeta subunits.

It is found in the cytoplasm. The protein resides in the golgi apparatus membrane. Its subcellular location is the cytoplasmic vesicle. The protein localises to the COPI-coated vesicle membrane. The coatomer is a cytosolic protein complex that binds to dilysine motifs and reversibly associates with Golgi non-clathrin-coated vesicles, which further mediate biosynthetic protein transport from the ER, via the Golgi up to the trans Golgi network. Coatomer complex is required for budding from Golgi membranes, and is essential for the retrograde Golgi-to-ER transport of dilysine-tagged proteins. The zeta subunit may be involved in regulating the coat assembly and, hence, the rate of biosynthetic protein transport due to its association-dissociation properties with the coatomer complex. The protein is Probable coatomer subunit zeta-B (copZb) of Dictyostelium discoideum (Social amoeba).